We begin with the raw amino-acid sequence, 274 residues long: F-box protein SKIP5 (274 aa).

The 48-residue stretch at 32–79 (LTSLNNLDDGCLMHILSFLSPIPDRYNTALVCHRWRYLACHPRLWLRV) folds into the F-box domain.

As to quaternary structure, part of a SCF (SKP1-cullin-F-box) protein ligase complex. Interacts with SKP1A/ASK1.

It functions in the pathway protein modification; protein ubiquitination. In Arabidopsis thaliana (Mouse-ear cress), this protein is F-box protein SKIP5 (SKIP5).